We begin with the raw amino-acid sequence, 390 residues long: MRKMLAAVSRVLAGAAQKPASRVLVASRNFANDATFEIKKCDLHRLEEGPPVTTVLTREDGLKYYRMMQTVRRMELKADQLYKQKIIRGFCHLCDGQEACCVGLEAGINPTDHLITAYRAHGFTFNRGHAVRAILAELTGRRGGCAKGKGGSMHMYAKNFYGGNGIVGAQVPLGAGIALACKYNGKDEVCLTLYGDGAANQGQIFEAYNMAALWKLPCIFICENNRYGMGTSVERAAASTDYYKRGDFIPGLRVDGMDILCVREATKFAAAYCRSGKGPILMELQTYRYHGHSMSDPGVSYRTREEIQEVRSKSDPIMLLKDRMVNSNLASVEELKEIDVEVRKEIEDAAQFATADPEPPLEELGYHIYSSDPPFEVRGANQWIKFKSVS.

Residues 1–29 (MRKMLAAVSRVLAGAAQKPASRVLVASRN) constitute a mitochondrion transit peptide. Lysine 63 is subject to N6-acetyllysine; alternate. Lysine 63 is modified (N6-succinyllysine; alternate). 11 residues coordinate pyruvate: histidine 92, tyrosine 118, arginine 119, alanine 157, glycine 165, valine 167, aspartate 196, glycine 197, alanine 198, asparagine 225, and tyrosine 227. The thiamine diphosphate site is built by tyrosine 118 and arginine 119. Residues glycine 165, valine 167, aspartate 196, glycine 197, alanine 198, and asparagine 225 each coordinate thiamine diphosphate. Aspartate 196 is a binding site for Mg(2+). Mg(2+)-binding residues include asparagine 225 and tyrosine 227. Serine 232 bears the Phosphoserine; by PDK1 mark. At lysine 244 the chain carries N6-acetyllysine; alternate. An N6-succinyllysine; alternate modification is found at lysine 244. Lysine 267 is modified (N6-acetyllysine). Lysine 277 carries the post-translational modification N6-succinyllysine. Histidine 292 provides a ligand contact to thiamine diphosphate. Serine 293 carries the post-translational modification Phosphoserine; by PDK1, PDK2, PDK3 and PDK4. Serine 295 carries the post-translational modification Phosphoserine. Residue serine 300 is modified to Phosphoserine; by PDK1, PDK2, PDK3 and PDK4. A Phosphotyrosine modification is found at tyrosine 301. Lysine 313 bears the N6-acetyllysine; alternate mark. The residue at position 313 (lysine 313) is an N6-succinyllysine; alternate. An N6-acetyllysine mark is found at lysine 321 and lysine 336. Residue lysine 385 is modified to N6-succinyllysine.

In terms of assembly, heterotetramer of two PDHA1 and two PDHB subunits. The heterotetramer interacts with DLAT, and is part of the multimeric pyruvate dehydrogenase complex that contains multiple copies of pyruvate dehydrogenase (E1), dihydrolipoamide acetyltransferase (DLAT, E2) and lipoamide dehydrogenase (DLD, E3). These subunits are bound to an inner core composed of about 48 DLAT and 12 PDHX molecules. Thiamine diphosphate is required as a cofactor. Mg(2+) serves as cofactor. Post-translationally, phosphorylation at Ser-232, Ser-293 and Ser-300 by PDK family kinases inactivates the enzyme; for this phosphorylation at a single site is sufficient. Phosphorylation at Ser-293 interferes with access to active site, and thereby inactivates the enzyme. Dephosphorylation at all three sites, i.e. at Ser-232, Ser-293 and Ser-300, is required for reactivation. Acetylation alters the phosphorylation pattern. Deacetylated by SIRT3. In terms of tissue distribution, in all tissues, but in very low amount in testis.

Its subcellular location is the mitochondrion matrix. The catalysed reaction is N(6)-[(R)-lipoyl]-L-lysyl-[protein] + pyruvate + H(+) = N(6)-[(R)-S(8)-acetyldihydrolipoyl]-L-lysyl-[protein] + CO2. Pyruvate dehydrogenase activity is inhibited by phosphorylation of PDHA1; it is reactivated by dephosphorylation. Its function is as follows. The pyruvate dehydrogenase complex catalyzes the overall conversion of pyruvate to acetyl-CoA and CO(2), and thereby links the glycolytic pathway to the tricarboxylic cycle. The protein is Pyruvate dehydrogenase E1 component subunit alpha, somatic form, mitochondrial (Pdha1) of Rattus norvegicus (Rat).